The following is an 87-amino-acid chain: MVKLRLKRYGRKQQPTYRIIAIDVKSRRQGRALKEVGFYDPRKDQTHLDVATIITFIQQGAQPTDTVSHILNRAGVFEQIHAMSIHE.

Belongs to the bacterial ribosomal protein bS16 family.

It is found in the plastid. Its subcellular location is the chloroplast. The polypeptide is Small ribosomal subunit protein bS16c (Zygnema circumcarinatum (Green alga)).